The primary structure comprises 166 residues: Urease accessory protein UreE 2 (166 aa).

The interval Glu-135 to Asn-154 is disordered.

Belongs to the UreE family.

Its subcellular location is the cytoplasm. Its function is as follows. Involved in urease metallocenter assembly. Binds nickel. Probably functions as a nickel donor during metallocenter assembly. The polypeptide is Urease accessory protein UreE 2 (Pseudomonas syringae pv. syringae (strain B728a)).